A 162-amino-acid chain; its full sequence is Protein-export protein SecB (162 aa).

Belongs to the SecB family. In terms of assembly, homotetramer, a dimer of dimers. One homotetramer interacts with 1 SecA dimer.

It is found in the cytoplasm. Its function is as follows. One of the proteins required for the normal export of preproteins out of the cell cytoplasm. It is a molecular chaperone that binds to a subset of precursor proteins, maintaining them in a translocation-competent state. It also specifically binds to its receptor SecA. The protein is Protein-export protein SecB of Legionella pneumophila subsp. pneumophila (strain Philadelphia 1 / ATCC 33152 / DSM 7513).